An 806-amino-acid polypeptide reads, in one-letter code: Acetyl-CoA decarbonylase/synthase complex subunit alpha 1 (806 aa).

6 residues coordinate [4Fe-4S] cluster: cysteine 73, cysteine 76, cysteine 77, cysteine 79, cysteine 84, and cysteine 94. Residue histidine 117 coordinates CO. [Ni-4Fe-4S] cluster contacts are provided by histidine 250, cysteine 278, and cysteine 323. 2 consecutive 4Fe-4S ferredoxin-type domains span residues 407–436 (DEEFADWVAKCADCGACMIACPEELDIPEA) and 446–475 (SYLEELHDQCIGCRRCEQVCKKEIPILNII). Positions 417, 420, 423, 427, 455, 458, 461, and 465 each coordinate [4Fe-4S] cluster. Residues cysteine 523, cysteine 552, and cysteine 587 each coordinate [Ni-4Fe-4S] cluster.

The protein belongs to the Ni-containing carbon monoxide dehydrogenase family. In terms of assembly, heterotetramer of two alpha and two epsilon subunits. The ACDS complex is made up of alpha, epsilon, beta, gamma and delta subunits with a probable stoichiometry of (alpha(2)epsilon(2))(4)-beta(8)-(gamma(1)delta(1))(8). It depends on [4Fe-4S] cluster as a cofactor. [Ni-4Fe-4S] cluster serves as cofactor.

The enzyme catalyses CO + 2 oxidized [2Fe-2S]-[ferredoxin] + H2O = 2 reduced [2Fe-2S]-[ferredoxin] + CO2 + 2 H(+). It functions in the pathway one-carbon metabolism; methanogenesis from acetate. Part of the ACDS complex that catalyzes the reversible cleavage of acetyl-CoA, allowing growth on acetate as sole source of carbon and energy. The alpha-epsilon subcomponent functions as a carbon monoxide dehydrogenase. The chain is Acetyl-CoA decarbonylase/synthase complex subunit alpha 1 from Methanosarcina acetivorans (strain ATCC 35395 / DSM 2834 / JCM 12185 / C2A).